We begin with the raw amino-acid sequence, 98 residues long: Serine protease inhibitor Kazal-type 14 (98 aa).

The signal sequence occupies residues 1–23 (MVKYFQVLWSLLFSIMLHSMLLA). The Kazal-like domain maps to 35–98 (GLIKIKCPYK…QIRYYHTGRC (64 aa)). Disulfide bonds link Cys41/Cys80, Cys58/Cys77, and Cys66/Cys98. The N-linked (GlcNAc...) asparagine glycan is linked to Asn52.

It localises to the secreted. Functionally, may be a serine protease inhibitor. The protein is Serine protease inhibitor Kazal-type 14 (Spink14) of Rattus norvegicus (Rat).